A 943-amino-acid chain; its full sequence is Leucine--tRNA ligase (943 aa).

A 'HIGH' region motif is present at residues 40–51 (PYPSGAGLHVGH). Positions 717-721 (KMSKS) match the 'KMSKS' region motif. K720 contacts ATP.

The protein belongs to the class-I aminoacyl-tRNA synthetase family.

The protein localises to the cytoplasm. The enzyme catalyses tRNA(Leu) + L-leucine + ATP = L-leucyl-tRNA(Leu) + AMP + diphosphate. The chain is Leucine--tRNA ligase from Bacteroides fragilis (strain ATCC 25285 / DSM 2151 / CCUG 4856 / JCM 11019 / LMG 10263 / NCTC 9343 / Onslow / VPI 2553 / EN-2).